The sequence spans 421 residues: CinA-like protein (421 aa).

It belongs to the CinA family.

This is CinA-like protein from Synechococcus sp. (strain ATCC 27144 / PCC 6301 / SAUG 1402/1) (Anacystis nidulans).